A 75-amino-acid chain; its full sequence is Small ribosomal subunit protein bS18 (75 aa).

The protein belongs to the bacterial ribosomal protein bS18 family. As to quaternary structure, part of the 30S ribosomal subunit. Forms a tight heterodimer with protein bS6.

Binds as a heterodimer with protein bS6 to the central domain of the 16S rRNA, where it helps stabilize the platform of the 30S subunit. The protein is Small ribosomal subunit protein bS18 of Yersinia enterocolitica serotype O:8 / biotype 1B (strain NCTC 13174 / 8081).